Here is a 299-residue protein sequence, read N- to C-terminus: Taste receptor type 2 member 50 (299 aa).

Methionine 1 is a topological domain (extracellular). The chain crosses the membrane as a helical span at residues 2 to 22; the sequence is IPFLHIFFSVLILVLFVLGNF. Topologically, residues 23–55 are cytoplasmic; it reads ANGFIALVNFIDWVKRKKISLADQILTALAVSR. The helical transmembrane segment at 56–76 threads the bilayer; that stretch reads VGLLWALLLNWYLTELNPAFY. The Extracellular segment spans residues 77–87; the sequence is SVELRITSYNA. The chain crosses the membrane as a helical span at residues 88-108; it reads WVVTNHFSMWLAASLSIFYLL. Residues 109–126 lie on the Cytoplasmic side of the membrane; it reads KIANFSNLSFLNLKRRVR. A helical transmembrane segment spans residues 127-147; that stretch reads SIILVILLGSLLFLVCHLLAV. The Extracellular segment spans residues 148–181; sequence NMDENMWTEEYEGNMTGKMKLRNAAHLSYMTVTT. Residue asparagine 161 is glycosylated (N-linked (GlcNAc...) asparagine). A helical transmembrane segment spans residues 182 to 202; the sequence is LWSFIPFMLSLISFLMLIFSL. Residues 203-229 are Cytoplasmic-facing; the sequence is CKHLKKMQLHGEGSRDPSTTVHIKALQ. A helical transmembrane segment spans residues 230–250; that stretch reads TLISFLLLCAIFFLFLIISVW. Residues 251–259 lie on the Extracellular side of the membrane; the sequence is SPRRLQNEP. A helical membrane pass occupies residues 260-280; the sequence is VFMVCKAVGNIYLSFDSFVLI. At 281-299 the chain is on the cytoplasmic side; sequence WRTKKLKHIFLLILCQIRC.

Belongs to the G-protein coupled receptor T2R family.

The protein resides in the membrane. In terms of biological role, receptor that may play a role in the perception of bitterness and is gustducin-linked. May play a role in sensing the chemical composition of the gastrointestinal content. The activity of this receptor may stimulate alpha gustducin, mediate PLC-beta-2 activation and lead to the gating of TRPM5. The protein is Taste receptor type 2 member 50 (TAS2R50) of Macaca mulatta (Rhesus macaque).